Reading from the N-terminus, the 263-residue chain is 4-hydroxy-2-oxo-heptane-1,7-dioate aldolase (263 aa).

The active-site Proton acceptor is the histidine 45. A substrate-binding site is contributed by glutamine 147. Glutamate 149 provides a ligand contact to a divalent metal cation. Positions 174 and 175 each coordinate substrate. Aspartate 175 is a binding site for a divalent metal cation.

The protein belongs to the HpcH/HpaI aldolase family. As to quaternary structure, homohexamer; trimer of dimers. The cofactor is a divalent metal cation.

It catalyses the reaction 4-hydroxy-2-oxoheptanedioate = succinate semialdehyde + pyruvate. Its pathway is aromatic compound metabolism; 4-hydroxyphenylacetate degradation; pyruvate and succinate semialdehyde from 4-hydroxyphenylacetate: step 7/7. Catalyzes the reversible retro-aldol cleavage of 4-hydroxy-2-ketoheptane-1,7-dioate (HKHD) to pyruvate and succinic semialdehyde. The protein is 4-hydroxy-2-oxo-heptane-1,7-dioate aldolase of Salmonella enteritidis PT4 (strain P125109).